The primary structure comprises 260 residues: Indole-3-glycerol phosphate synthase (260 aa).

Belongs to the TrpC family.

The catalysed reaction is 1-(2-carboxyphenylamino)-1-deoxy-D-ribulose 5-phosphate + H(+) = (1S,2R)-1-C-(indol-3-yl)glycerol 3-phosphate + CO2 + H2O. It functions in the pathway amino-acid biosynthesis; L-tryptophan biosynthesis; L-tryptophan from chorismate: step 4/5. This chain is Indole-3-glycerol phosphate synthase, found in Neisseria meningitidis serogroup C / serotype 2a (strain ATCC 700532 / DSM 15464 / FAM18).